The sequence spans 181 residues: Ribulose bisphosphate carboxylase small subunit, chloroplastic 6 (181 aa).

The N-terminal 57 residues, 1–57, are a transit peptide targeting the chloroplast; that stretch reads MASSIVSSAAVATRSNVAQASMVAPFTGLKSAASFPVTKKNNNVDITSLASNGGRVR.

This sequence belongs to the RuBisCO small chain family. As to quaternary structure, heterohexadecamer of 8 large and 8 small subunits.

It localises to the plastid. The protein localises to the chloroplast. RuBisCO catalyzes two reactions: the carboxylation of D-ribulose 1,5-bisphosphate, the primary event in carbon dioxide fixation, as well as the oxidative fragmentation of the pentose substrate. Both reactions occur simultaneously and in competition at the same active site. Although the small subunit is not catalytic it is essential for maximal activity. This Solanum tuberosum (Potato) protein is Ribulose bisphosphate carboxylase small subunit, chloroplastic 6.